A 495-amino-acid chain; its full sequence is Probable plastidic glucose transporter 3 (495 aa).

Transmembrane regions (helical) follow at residues 55 to 75, 97 to 117, 131 to 151, 154 to 174, 183 to 203, 214 to 234, 294 to 314, 330 to 350, 357 to 377, 384 to 404, 425 to 445, and 451 to 471; these read LPHV…LGVV, LVVS…GLVA, LPMI…GMLL, FLVG…VTEV, YGSS…FAGI, ICFW…ELCV, VVFI…NAVF, SANI…VVLM, VLLI…AIAY, FGTL…FATG, ALAV…LLFL, and LGSV…VIFV.

It belongs to the major facilitator superfamily. Sugar transporter (TC 2.A.1.1) family.

It localises to the plastid. Its subcellular location is the chloroplast membrane. Its function is as follows. May be involved in the efflux of glucose towards the cytosol. The chain is Probable plastidic glucose transporter 3 from Arabidopsis thaliana (Mouse-ear cress).